A 568-amino-acid polypeptide reads, in one-letter code: Phenylalanine--tRNA ligase beta subunit (568 aa).

The 76-residue stretch at 278 to 353 (LTPKSFEVEL…IAYGYNEIEP (76 aa)) folds into the B5 domain. Aspartate 331, aspartate 337, glutamate 340, and aspartate 341 together coordinate Mg(2+).

This sequence belongs to the phenylalanyl-tRNA synthetase beta subunit family. Type 2 subfamily. As to quaternary structure, tetramer of two alpha and two beta subunits. It depends on Mg(2+) as a cofactor.

It is found in the cytoplasm. The enzyme catalyses tRNA(Phe) + L-phenylalanine + ATP = L-phenylalanyl-tRNA(Phe) + AMP + diphosphate + H(+). In Thermococcus gammatolerans (strain DSM 15229 / JCM 11827 / EJ3), this protein is Phenylalanine--tRNA ligase beta subunit.